Reading from the N-terminus, the 278-residue chain is Octanoyl-[GcvH]:protein N-octanoyltransferase (278 aa).

Residues 41–247 form the BPL/LPL catalytic domain; it reads LVSPPTIRTW…LLHRLAGEVH (207 aa). The Acyl-thioester intermediate role is filled by cysteine 146.

It belongs to the octanoyltransferase LipL family.

The catalysed reaction is N(6)-octanoyl-L-lysyl-[glycine-cleavage complex H protein] + L-lysyl-[lipoyl-carrier protein] = N(6)-octanoyl-L-lysyl-[lipoyl-carrier protein] + L-lysyl-[glycine-cleavage complex H protein]. Its pathway is protein modification; protein lipoylation via endogenous pathway; protein N(6)-(lipoyl)lysine from octanoyl-[acyl-carrier-protein]. In terms of biological role, catalyzes the amidotransfer (transamidation) of the octanoyl moiety from octanoyl-GcvH to the lipoyl domain of the E2 subunit of lipoate-dependent enzymes. The chain is Octanoyl-[GcvH]:protein N-octanoyltransferase from Lysinibacillus sphaericus (strain C3-41).